Reading from the N-terminus, the 189-residue chain is Large ribosomal subunit protein uL10 (189 aa).

The protein belongs to the universal ribosomal protein uL10 family. As to quaternary structure, part of the ribosomal stalk of the 50S ribosomal subunit. The N-terminus interacts with L11 and the large rRNA to form the base of the stalk. The C-terminus forms an elongated spine to which L12 dimers bind in a sequential fashion forming a multimeric L10(L12)X complex.

Forms part of the ribosomal stalk, playing a central role in the interaction of the ribosome with GTP-bound translation factors. This is Large ribosomal subunit protein uL10 from Rippkaea orientalis (strain PCC 8801 / RF-1) (Cyanothece sp. (strain PCC 8801)).